The following is a 433-amino-acid chain: Alpha-(1,3)-fucosyltransferase 4 (433 aa).

Residues Met-1 to Val-20 form a disordered region. Residues Met-1–Ser-54 are Cytoplasmic-facing. A helical; Signal-anchor for type II membrane protein membrane pass occupies residues Ser-55–Gly-74. Topologically, residues Gln-75–Arg-433 are lumenal. Asn-117 and Asn-218 each carry an N-linked (GlcNAc...) asparagine glycan.

This sequence belongs to the glycosyltransferase 10 family. In adult, highest expression in spleen, testis, brain, lung, kidney and skeletal muscle and to a lesser extent in liver and heart.

It is found in the golgi apparatus. The protein localises to the golgi stack membrane. The catalysed reaction is a beta-D-galactosyl-(1-&gt;4)-N-acetyl-beta-D-glucosaminyl derivative + GDP-beta-L-fucose = a beta-D-galactosyl-(1-&gt;4)-[alpha-L-fucosyl-(1-&gt;3)]-N-acetyl-beta-D-glucosaminyl derivative + GDP + H(+). It catalyses the reaction an N-acetyl-alpha-neuraminyl-(2-&gt;3)-beta-D-galactosyl-(1-&gt;4)-N-acetyl-beta-D-glucosaminyl derivative + GDP-beta-L-fucose = an alpha-Neu5Ac-(2-&gt;3)-beta-D-Gal-(1-&gt;4)-[alpha-L-Fuc-(1-&gt;3)]-beta-D-GlcNAc derivative + GDP + H(+). It carries out the reaction an alpha-Neu5Ac-(2-&gt;3)-beta-D-Gal-(1-&gt;4)-beta-D-GlcNAc-(1-&gt;3)-beta-D-Gal-(1-&gt;4)-beta-D-GlcNAc derivative + GDP-beta-L-fucose = an alpha-Neu5Ac-(2-&gt;3)-beta-D-Gal-(1-&gt;4)-beta-D-GlcNAc-(1-&gt;3)-beta-D-Gal-(1-&gt;4)-[alpha-L-Fuc-(1-&gt;3)]-beta-D-GlcNAc derivative + GDP + H(+). The enzyme catalyses an alpha-Neu5Ac-(2-&gt;3)-beta-D-Gal-(1-&gt;4)-beta-D-GlcNAc6S derivative + GDP-beta-L-fucose = an alpha-Neu5Ac-(2-&gt;3)-beta-D-Gal-(1-&gt;4)-[alpha-L-Fuc-(1-&gt;3)]-beta-D-GlcNAc6S derivative + GDP + H(+). It participates in protein modification; protein glycosylation. Its function is as follows. Catalyzes alpha(1-&gt;3) linkage of fucosyl moiety transferred from GDP-beta-L-fucose to N-acetyl glucosamine (GlcNAc) within type 2 lactosamine (LacNAc, Gal-beta(1-&gt;4)GlcNAc) glycan attached to N- or O-linked glycoproteins. Robustly fucosylates nonsialylated distal LacNAc unit of the polylactosamine chain to form Lewis X antigen (CD15), a glycan determinant known to mediate important cellular functions in development and immunity. Fucosylates with lower efficiency sialylated LacNAc acceptors to form sialyl Lewis X and 6-sulfo sialyl Lewis X determinants that serve as recognition epitopes for C-type lectins. Together with FUT7 contributes to SELE, SELL and SELP selectin ligand biosynthesis and selectin-dependent lymphocyte homing, leukocyte migration and blood leukocyte homeostasis. In a cell type specific manner, may also fucosylate the internal LacNAc unit of the polylactosamine chain to form VIM-2 antigen that serves as recognition epitope for SELE. This Rattus norvegicus (Rat) protein is Alpha-(1,3)-fucosyltransferase 4 (Fut4).